Consider the following 307-residue polypeptide: Putative flagellar export/assembly protein LafU (307 aa).

The helical transmembrane segment at 32–54 (AWKVAFADFTLAMMALFMTLWIV) threads the bilayer. The tract at residues 87-108 (SPSHPPKPATVAAPEETEKKAR) is disordered. Positions 154–272 (LRVLIKDDQN…RIEIMVLTKS (119 aa)) constitute an OmpA-like domain.

Belongs to the MotB family.

The protein localises to the cell inner membrane. In terms of biological role, part of the flagellar gene cluster Flag-2. However, the Flag-2 flagellar system could be inactive in strain 042 due to a frameshift in lfgC. The polypeptide is Putative flagellar export/assembly protein LafU (Escherichia coli O44:H18 (strain 042 / EAEC)).